We begin with the raw amino-acid sequence, 181 residues long: Adenine phosphoribosyltransferase (181 aa).

The protein belongs to the purine/pyrimidine phosphoribosyltransferase family. As to quaternary structure, homodimer.

It is found in the cytoplasm. The catalysed reaction is AMP + diphosphate = 5-phospho-alpha-D-ribose 1-diphosphate + adenine. Its pathway is purine metabolism; AMP biosynthesis via salvage pathway; AMP from adenine: step 1/1. Catalyzes a salvage reaction resulting in the formation of AMP, that is energically less costly than de novo synthesis. The sequence is that of Adenine phosphoribosyltransferase from Shewanella loihica (strain ATCC BAA-1088 / PV-4).